A 282-amino-acid chain; its full sequence is HTH-type transcriptional activator RhaR (282 aa).

Residues aspartate 179–leucine 277 enclose the HTH araC/xylS-type domain. 2 consecutive DNA-binding regions (H-T-H motif) follow at residues aspartate 196 to threonine 217 and isoleucine 244 to threonine 267.

Binds DNA as a dimer.

The protein resides in the cytoplasm. In terms of biological role, activates expression of the rhaSR operon in response to L-rhamnose. The polypeptide is HTH-type transcriptional activator RhaR (Salmonella agona (strain SL483)).